The following is a 274-amino-acid chain: MPFVTASDGTEIFYKDWGSGRPIMFHHGWPLSSDDWDSQLLFLVQRGYRVIAHDRRGHGRSAQVGHGHDMDHYAADAAAVVAHLGLRDVVHVGHSTGGGEVARYVARHGAGRVAKAVLIGAVPPLMVQTESNPEGLPVEVFDGFREAVVTNRSQFYLDLASGPFYGFNRPGADISQGVIQNWWRQGMTGSAQAHYEGIKAFSETDFTDDLRAIDVPTLIMHGDDDQIVPIANSAETAVTLVKNARLKVYPGLSHGMCTVNADTVNADLLSFIES.

Residues 22 to 254 form the AB hydrolase-1 domain; the sequence is PIMFHHGWPL…RLKVYPGLSH (233 aa). Catalysis depends on residues serine 95, aspartate 225, and histidine 254.

It belongs to the AB hydrolase superfamily. Bacterial non-heme haloperoxidase / perhydrolase family.

The sequence is that of Non-heme haloperoxidase (thcF) from Rhodococcus erythropolis (Arthrobacter picolinophilus).